Consider the following 365-residue polypeptide: NAD(P)H-quinone oxidoreductase subunit 1, chloroplastic (365 aa).

Transmembrane regions (helical) follow at residues 30 to 50, 104 to 124, 129 to 149, 253 to 273, 302 to 322, and 338 to 358; these read LVPI…IVWL, IAVI…HFVL, IGVF…LMSG, FGLF…FVAV, VFGT…FLFI, and LLNL…LLTT.

This sequence belongs to the complex I subunit 1 family. As to quaternary structure, NDH is composed of at least 16 different subunits, 5 of which are encoded in the nucleus.

The protein localises to the plastid. The protein resides in the chloroplast thylakoid membrane. It catalyses the reaction a plastoquinone + NADH + (n+1) H(+)(in) = a plastoquinol + NAD(+) + n H(+)(out). The enzyme catalyses a plastoquinone + NADPH + (n+1) H(+)(in) = a plastoquinol + NADP(+) + n H(+)(out). In terms of biological role, NDH shuttles electrons from NAD(P)H:plastoquinone, via FMN and iron-sulfur (Fe-S) centers, to quinones in the photosynthetic chain and possibly in a chloroplast respiratory chain. The immediate electron acceptor for the enzyme in this species is believed to be plastoquinone. Couples the redox reaction to proton translocation, and thus conserves the redox energy in a proton gradient. This is NAD(P)H-quinone oxidoreductase subunit 1, chloroplastic from Populus trichocarpa (Western balsam poplar).